Consider the following 643-residue polypeptide: MRLSDVSHPNQLHGLTTAQLEDVACQIRERHLQVVSTSGGHLGPGLGVVELTLALYQTLDLDHDKVVWDVGHQAYPHKLLTGRYGDFDSLRQQNGVAGYLKRSESSFDHFGAGHASTSISAALGMALARDRQGKDYKCVAVIGDGALTGGMALEAINHAGHLPSTPFLVVLNDNDMSISPPVGALSTHLNRMRHSAPIQFISDSVQEGVRNIPFIGKEIPQEIKSLTGSVKRLAVPKVGAVFEELGFTYMGPVDGHDIAQMTRTFQAAHRIGGPVLVHVATTKGKGYPYAEADQVGYHAQSAFDLTTGKSIPSKTPKPPSYSKVFGQTLVKICEQNSKVVGITAAMATGTGLDLLQKAIPDQYIDVGIAEQHAVTLAAGMACDGLRPVCAIYSTFLQRAFDQLIHDVGIQNLPVTFVMDRAGIVGADGPTHQGQYDISYLRSIPNFTVMAPKDEAELQRMLVTCLSHDGPTALRIPRGPGEGVTLMEEGWDPLKIGRGEILSEGSDLLIIAYGSMVAPAQKTALCLKESGISATVINARFLRPLDQGLIHPLARRIGKVVTMEEGTLLGGFGSAIVESFADQDIAVSTYRIGIPDKLVHHASPQQSKEELGLTPTAMADNIKKRFGWDNSDSLFVKNSNTSTI.

Thiamine diphosphate contacts are provided by residues histidine 72 and 113–115 (GHA). Aspartate 144 provides a ligand contact to Mg(2+). Thiamine diphosphate is bound by residues 145-146 (GA), asparagine 174, tyrosine 287, and glutamate 370. Asparagine 174 is a binding site for Mg(2+).

It belongs to the transketolase family. DXPS subfamily. As to quaternary structure, homodimer. Requires Mg(2+) as cofactor. It depends on thiamine diphosphate as a cofactor.

The enzyme catalyses D-glyceraldehyde 3-phosphate + pyruvate + H(+) = 1-deoxy-D-xylulose 5-phosphate + CO2. Its pathway is metabolic intermediate biosynthesis; 1-deoxy-D-xylulose 5-phosphate biosynthesis; 1-deoxy-D-xylulose 5-phosphate from D-glyceraldehyde 3-phosphate and pyruvate: step 1/1. Catalyzes the acyloin condensation reaction between C atoms 2 and 3 of pyruvate and glyceraldehyde 3-phosphate to yield 1-deoxy-D-xylulose-5-phosphate (DXP). The sequence is that of 1-deoxy-D-xylulose-5-phosphate synthase from Prochlorococcus marinus (strain SARG / CCMP1375 / SS120).